The chain runs to 512 residues: Cytochrome P450 26B1 (512 aa).

A heme-binding site is contributed by Cys441.

Belongs to the cytochrome P450 family. Heme serves as cofactor. As to expression, highly expressed in brain, particularly in the cerebellum and pons.

The protein resides in the endoplasmic reticulum membrane. It localises to the microsome membrane. The enzyme catalyses all-trans-retinoate + reduced [NADPH--hemoprotein reductase] + O2 = all-trans-4-hydroxyretinoate + oxidized [NADPH--hemoprotein reductase] + H2O + H(+). It catalyses the reaction all-trans-retinoate + reduced [NADPH--hemoprotein reductase] + O2 = all-trans-18-hydroxyretinoate + oxidized [NADPH--hemoprotein reductase] + H2O + H(+). In terms of biological role, a cytochrome P450 monooxygenase involved in the metabolism of retinoates (RAs), the active metabolites of vitamin A, and critical signaling molecules in animals. RAs exist as at least four different isomers: all-trans-RA (atRA), 9-cis-RA, 13-cis-RA, and 9,13-dicis-RA, where atRA is considered to be the biologically active isomer, although 9-cis-RA and 13-cis-RA also have activity. Catalyzes the hydroxylation of atRA primarily at C-4 and C-18, thereby contributing to the regulation of atRA homeostasis and signaling. Hydroxylation of atRA limits its biological activity and initiates a degradative process leading to its eventual elimination. Involved in the convertion of atRA to all-trans-4-oxo-RA. Can oxidize all-trans-13,14-dihydroretinoate (DRA) to metabolites which could include all-trans-4-oxo-DRA, all-trans-4-hydroxy-DRA, all-trans-5,8-epoxy-DRA, and all-trans-18-hydroxy-DRA. Shows preference for the following substrates: atRA &gt; 9-cis-RA &gt; 13-cis-RA. Plays a central role in germ cell development: acts by degrading RAs in the developing testis, preventing STRA8 expression, thereby leading to delay of meiosis. Required for the maintenance of the undifferentiated state of male germ cells during embryonic development in Sertoli cells, inducing arrest in G0 phase of the cell cycle and preventing meiotic entry. Plays a role in skeletal development, both at the level of patterning and in the ossification of bone and the establishment of some synovial joints. Essential for postnatal survival. Its function is as follows. Also has a significant activity in oxidation of tazarotenic acid and may therefore metabolize that xenobiotic in vivo. In Homo sapiens (Human), this protein is Cytochrome P450 26B1 (CYP26B1).